We begin with the raw amino-acid sequence, 518 residues long: Probable cyclic di-GMP phosphodiesterase PdeN (518 aa).

2 consecutive transmembrane segments (helical) span residues 16–36 (CIVA…LVAW) and 236–256 (VWYA…LCYY). An EAL domain is found at 261-514 (RMRPGREIMT…DFVRWLKKPY (254 aa)).

Its subcellular location is the cell inner membrane. The catalysed reaction is 3',3'-c-di-GMP + H2O = 5'-phosphoguanylyl(3'-&gt;5')guanosine + H(+). Its function is as follows. Phosphodiesterase (PDE) that catalyzes the hydrolysis of cyclic-di-GMP (c-di-GMP) to 5'-pGpG. The chain is Probable cyclic di-GMP phosphodiesterase PdeN from Escherichia coli (strain K12).